The primary structure comprises 391 residues: tRNA (cytosine(38)-C(5))-methyltransferase (391 aa).

An SAM-dependent MTase C5-type domain is found at 4 to 391 (LRALELYSGI…VAKLIKILCD (388 aa)). S-adenosyl-L-methionine is bound by residues 13–15 (IGG), aspartate 34, 57–58 (IE), and serine 76. The active site involves cysteine 79. Residue serine 376 coordinates S-adenosyl-L-methionine.

It belongs to the class I-like SAM-binding methyltransferase superfamily. C5-methyltransferase family.

The protein localises to the cytoplasm. The enzyme catalyses cytidine(38) in tRNA + S-adenosyl-L-methionine = 5-methylcytidine(38) in tRNA + S-adenosyl-L-homocysteine + H(+). In terms of biological role, specifically methylates cytosine 38 in the anticodon loop of tRNA(Asp). Has higher activity on tRNA(Asp) modified with queuosine at position 34. The protein is tRNA (cytosine(38)-C(5))-methyltransferase (TRDMT1) of Bos taurus (Bovine).